The sequence spans 531 residues: Plant UBX domain-containing protein 11 (531 aa).

At Met1 the chain carries N-acetylmethionine. A compositionally biased stretch (low complexity) spans 160 to 173 (AVASPSTASSVQPS). 2 disordered regions span residues 160 to 316 (AVAS…KASD) and 441 to 531 (ANAS…NDRR). Composition is skewed to polar residues over residues 174-190 (ETKS…NNDG) and 201-214 (EPSN…NQPA). The span at 290–301 (VDTKETMKPKDE) shows a compositional bias: basic and acidic residues. A UBX domain is found at 312–390 (KKASDVHLNI…RLFDRQALVV (79 aa)). Polar residues-rich tracts occupy residues 441 to 478 (ANAS…GRSN) and 486 to 496 (TSRIGSNIHTL).

In terms of assembly, interacts with CDC48A.

In Arabidopsis thaliana (Mouse-ear cress), this protein is Plant UBX domain-containing protein 11.